Reading from the N-terminus, the 648-residue chain is Mitochondrial Rho GTPase 1 (648 aa).

The Cytoplasmic portion of the chain corresponds to 1 to 619; the sequence is MARYAAGAVD…KHYNRLINRS (619 aa). Ser14 is modified (phosphoserine). One can recognise a Miro 1 domain in the interval 15–182; sequence PKSVRIVVVG…FYYAQKTVLH (168 aa). EF-hand domains are found at residues 198–233 and 319–354; these read RCVR…CFHA and AAID…APES. Residues Asp211, Asp213, Asp215, Glu222, Asp332, Asp334, Asp336, Asn338, and Glu343 each contribute to the Ca(2+) site. One can recognise a Miro 2 domain in the interval 427–595; the sequence is RKVFQCFVFG…FRKILTAAQH (169 aa). Residues 620 to 640 form a helical membrane-spanning segment; that stretch reads LMAVSIGAAAVVVGLAAYRVY. Residues 641–648 lie on the Mitochondrial intermembrane side of the membrane; it reads ATRKSSSA.

It belongs to the mitochondrial Rho GTPase family. As to expression, expressed in roots, leaves, stems, flowers and siliques.

The protein localises to the mitochondrion outer membrane. Functionally, mitochondrial GTPase required to maintain proper development, morphology and intracellular distribution of mitochondria, which in turn are essential for the progress of embryonic cell division, development of haploid male and female gametes, and pollen tube growth. The sequence is that of Mitochondrial Rho GTPase 1 from Arabidopsis thaliana (Mouse-ear cress).